Consider the following 290-residue polypeptide: Porphobilinogen deaminase (290 aa).

At Cys-237 the chain carries S-(dipyrrolylmethanemethyl)cysteine.

It belongs to the HMBS family. As to quaternary structure, monomer. Dipyrromethane is required as a cofactor.

It catalyses the reaction 4 porphobilinogen + H2O = hydroxymethylbilane + 4 NH4(+). It functions in the pathway porphyrin-containing compound metabolism; protoporphyrin-IX biosynthesis; coproporphyrinogen-III from 5-aminolevulinate: step 2/4. In terms of biological role, tetrapolymerization of the monopyrrole PBG into the hydroxymethylbilane pre-uroporphyrinogen in several discrete steps. This Clostridium kluyveri (strain NBRC 12016) protein is Porphobilinogen deaminase.